The primary structure comprises 209 residues: Peptidyl-tRNA hydrolase (209 aa).

Tyr-14 is a binding site for tRNA. His-19 acts as the Proton acceptor in catalysis. Residues Tyr-68, Asn-70, and Asn-116 each contribute to the tRNA site.

The protein belongs to the PTH family. As to quaternary structure, monomer.

The protein resides in the cytoplasm. It carries out the reaction an N-acyl-L-alpha-aminoacyl-tRNA + H2O = an N-acyl-L-amino acid + a tRNA + H(+). Hydrolyzes ribosome-free peptidyl-tRNAs (with 1 or more amino acids incorporated), which drop off the ribosome during protein synthesis, or as a result of ribosome stalling. Its function is as follows. Catalyzes the release of premature peptidyl moieties from peptidyl-tRNA molecules trapped in stalled 50S ribosomal subunits, and thus maintains levels of free tRNAs and 50S ribosomes. The chain is Peptidyl-tRNA hydrolase from Phenylobacterium zucineum (strain HLK1).